The primary structure comprises 144 residues: Cytochrome c-type biogenesis protein CcmE (144 aa).

At 1–7 (MKPRHKR) the chain is on the cytoplasmic side. Residues 8-28 (ALIIIAALIAIGVAALLILNA) traverse the membrane as a helical; Signal-anchor for type II membrane protein segment. Residues 29–144 (LNSNIALYVT…DQAQKNGSAK (116 aa)) lie on the Periplasmic side of the membrane. His-121 and Tyr-125 together coordinate heme.

Belongs to the CcmE/CycJ family.

Its subcellular location is the cell inner membrane. Functionally, heme chaperone required for the biogenesis of c-type cytochromes. Transiently binds heme delivered by CcmC and transfers the heme to apo-cytochromes in a process facilitated by CcmF and CcmH. The polypeptide is Cytochrome c-type biogenesis protein CcmE (Polynucleobacter necessarius subsp. necessarius (strain STIR1)).